A 185-amino-acid polypeptide reads, in one-letter code: Large ribosomal subunit protein uL18 (185 aa).

It belongs to the universal ribosomal protein uL18 family. Part of the 50S ribosomal subunit. Contacts the 5S and 23S rRNAs.

Functionally, this is one of the proteins that bind and probably mediate the attachment of the 5S RNA into the large ribosomal subunit, where it forms part of the central protuberance. The sequence is that of Large ribosomal subunit protein uL18 from Halorubrum lacusprofundi (strain ATCC 49239 / DSM 5036 / JCM 8891 / ACAM 34).